Here is a 473-residue protein sequence, read N- to C-terminus: Photosystem II CP43 reaction center protein (473 aa).

Residues 1–14 (MKILYSLRRFYHVE) constitute a propeptide that is removed on maturation. T15 is subject to N-acetylthreonine. Phosphothreonine is present on T15. The next 5 membrane-spanning stretches (helical) occupy residues 69–93 (LFEV…PHLA), 134–155 (LLGP…KDRN), 178–200 (KALY…RKIT), 255–275 (KPFA…LSYS), and 291–312 (WFNN…ASQA). E367 is a [CaMn4O5] cluster binding site. A helical transmembrane segment spans residues 447-471 (RARAAAAGFEKGIDRDLEPVLYMTP).

It belongs to the PsbB/PsbC family. PsbC subfamily. As to quaternary structure, PSII is composed of 1 copy each of membrane proteins PsbA, PsbB, PsbC, PsbD, PsbE, PsbF, PsbH, PsbI, PsbJ, PsbK, PsbL, PsbM, PsbT, PsbX, PsbY, PsbZ, Psb30/Ycf12, at least 3 peripheral proteins of the oxygen-evolving complex and a large number of cofactors. It forms dimeric complexes. It depends on Binds multiple chlorophylls and provides some of the ligands for the Ca-4Mn-5O cluster of the oxygen-evolving complex. It may also provide a ligand for a Cl- that is required for oxygen evolution. PSII binds additional chlorophylls, carotenoids and specific lipids. as a cofactor.

The protein localises to the plastid. Its subcellular location is the chloroplast thylakoid membrane. One of the components of the core complex of photosystem II (PSII). It binds chlorophyll and helps catalyze the primary light-induced photochemical processes of PSII. PSII is a light-driven water:plastoquinone oxidoreductase, using light energy to abstract electrons from H(2)O, generating O(2) and a proton gradient subsequently used for ATP formation. The chain is Photosystem II CP43 reaction center protein from Saccharum hybrid (Sugarcane).